The sequence spans 267 residues: Type II pantothenate kinase (267 aa).

6–13 (DAGGTLIK) is an ATP binding site. Glu70 functions as the Proton acceptor in the catalytic mechanism. ATP-binding positions include Thr99, 121 to 125 (GGMIQ), Tyr137, and Ser225.

Belongs to the type II pantothenate kinase family. Homodimer.

Its subcellular location is the cytoplasm. The enzyme catalyses (R)-pantothenate + ATP = (R)-4'-phosphopantothenate + ADP + H(+). The protein operates within cofactor biosynthesis; coenzyme A biosynthesis; CoA from (R)-pantothenate: step 1/5. Functionally, catalyzes the phosphorylation of pantothenate (Pan), the first step in CoA biosynthesis. The protein is Type II pantothenate kinase of Staphylococcus aureus (strain USA300).